The following is a 412-amino-acid chain: CinA-like protein (412 aa).

This sequence belongs to the CinA family.

This is CinA-like protein from Salinibacter ruber (strain DSM 13855 / M31).